The chain runs to 379 residues: Cobalt-precorrin-5B C(1)-methyltransferase (379 aa).

The protein belongs to the CbiD family.

It catalyses the reaction Co-precorrin-5B + S-adenosyl-L-methionine = Co-precorrin-6A + S-adenosyl-L-homocysteine. It participates in cofactor biosynthesis; adenosylcobalamin biosynthesis; cob(II)yrinate a,c-diamide from sirohydrochlorin (anaerobic route): step 6/10. Its function is as follows. Catalyzes the methylation of C-1 in cobalt-precorrin-5B to form cobalt-precorrin-6A. The sequence is that of Cobalt-precorrin-5B C(1)-methyltransferase from Salmonella paratyphi B (strain ATCC BAA-1250 / SPB7).